The sequence spans 282 residues: Nudix hydrolase 7 (282 aa).

A Nudix hydrolase domain is found at 101 to 233 (SHVVGAGALV…KNEMFKFMAN (133 aa)). The short motif at 139–160 (GVINEGEDIWTGVAREVEEETG) is the Nudix box element. The Mg(2+) site is built by Glu-154 and Glu-158.

This sequence belongs to the Nudix hydrolase family. As to quaternary structure, homodimer. Interacts with RACK1A, GG1 and GG2. The cofactor is Mg(2+). As to expression, expressed in stems, leaves, roots, flowers and siliques.

Its subcellular location is the nucleus. It localises to the cytoplasm. The protein resides in the cell membrane. It catalyses the reaction ADP-D-ribose + H2O = D-ribose 5-phosphate + AMP + 2 H(+). The enzyme catalyses NAD(+) + H2O = beta-nicotinamide D-ribonucleotide + AMP + 2 H(+). The catalysed reaction is NADH + H2O = reduced beta-nicotinamide D-ribonucleotide + AMP + 2 H(+). Not inhibited by fluoride. Functionally, mediates the hydrolysis of some nucleoside diphosphate derivatives. Can use both NADH and ADP-ribose as substrates, but not 8-oxo-dGTP, cyclic ADP-ribose, GDP-mannose, UDP-glucose, ATP, or GTP. Exerts negative control of EDS1 signaling. This chain is Nudix hydrolase 7 (NUDT7), found in Arabidopsis thaliana (Mouse-ear cress).